Consider the following 153-residue polypeptide: Arachidonate 5-lipoxygenase-activating protein (153 aa).

The Lumenal portion of the chain corresponds to 1 to 8; sequence MDQETVGN. A helical membrane pass occupies residues 9–30; that stretch reads IVLLAIVTLISVVQNGFFAHKV. Residues 31–52 are Cytoplasmic-facing; it reads EHESKTHNGRSFQRTGPLAFER. The chain crosses the membrane as a helical span at residues 53-77; it reads VYTANQNCVDAYPTFLVMLWSAGLL. At 78–80 the chain is on the lumenal side; the sequence is CSQ. The chain crosses the membrane as a helical span at residues 81-102; sequence VPAAFAGLMYLFVRQKYFVGYL. Residues 103-107 lie on the Cytoplasmic side of the membrane; sequence GERTQ. The stretch at 108–115 is an intramembrane region; it reads STPGYIFG. A helical membrane pass occupies residues 116–128; that stretch reads KRIILFLFAMSLA. Residues 129-153 lie on the Lumenal side of the membrane; it reads GILNYFLIAFFGSDFENYIKTVTTT.

The protein belongs to the MAPEG family. In terms of assembly, homotrimer. Interacts with LTC4S and ALOX5.

Its subcellular location is the nucleus membrane. It localises to the endoplasmic reticulum membrane. Required for leukotriene biosynthesis by ALOX5 (5-lipoxygenase). Anchors ALOX5 to the membrane. Binds arachidonic acid, and could play an essential role in the transfer of arachidonic acid to ALOX5. Binds to MK-886, a compound that blocks the biosynthesis of leukotrienes. The polypeptide is Arachidonate 5-lipoxygenase-activating protein (ALOX5AP) (Ovis aries (Sheep)).